Consider the following 193-residue polypeptide: Bifunctional protein PyrR (193 aa).

Substrate is bound by residues 48 to 49, Arg89, Arg93, 110 to 118, Arg143, and Val167; these read TR and DDVLFSGRT. The PRPP-binding motif lies at 106 to 118; the sequence is VVLVDDVLFSGRT.

Belongs to the purine/pyrimidine phosphoribosyltransferase family. PyrR subfamily.

It catalyses the reaction UMP + diphosphate = 5-phospho-alpha-D-ribose 1-diphosphate + uracil. Regulates the transcription of the pyrimidine nucleotide (pyr) operon in response to exogenous pyrimidines. In terms of biological role, also displays a weak uracil phosphoribosyltransferase activity which is not physiologically significant. The chain is Bifunctional protein PyrR from Streptomyces coelicolor (strain ATCC BAA-471 / A3(2) / M145).